Reading from the N-terminus, the 35-residue chain is Small toxic polypeptide LdrB (35 aa).

The helical transmembrane segment at 10 to 30 (FWHDLAAPILAGIITAAIVGW) threads the bilayer.

This sequence belongs to the Ldr toxic peptide family.

It localises to the cell inner membrane. Its function is as follows. Toxic component of a type I toxin-antitoxin (TA) system. Overexpression causes rapid cell killing, probably by disrupting the cell inner membrane and disruption of ATP synthesis. The polypeptide is Small toxic polypeptide LdrB (ldrB) (Escherichia coli (strain K12)).